A 328-amino-acid polypeptide reads, in one-letter code: Tetraacyldisaccharide 4'-kinase (328 aa).

An ATP-binding site is contributed by 55-62 (TAGGNGKT).

Belongs to the LpxK family.

The enzyme catalyses a lipid A disaccharide + ATP = a lipid IVA + ADP + H(+). Its pathway is glycolipid biosynthesis; lipid IV(A) biosynthesis; lipid IV(A) from (3R)-3-hydroxytetradecanoyl-[acyl-carrier-protein] and UDP-N-acetyl-alpha-D-glucosamine: step 6/6. Functionally, transfers the gamma-phosphate of ATP to the 4'-position of a tetraacyldisaccharide 1-phosphate intermediate (termed DS-1-P) to form tetraacyldisaccharide 1,4'-bis-phosphate (lipid IVA). In Shigella flexneri serotype 5b (strain 8401), this protein is Tetraacyldisaccharide 4'-kinase.